A 449-amino-acid polypeptide reads, in one-letter code: Sensor protein QseC (449 aa).

The Cytoplasmic portion of the chain corresponds to 1–12 (MKLTQRLSLRVR). Residues 13 to 33 (LTLIFLILVSITWAISSFVAW) form a helical membrane-spanning segment. Residues 34–161 (RKTTDNVDEL…REDMALAIVA (128 aa)) are Periplasmic-facing. A helical membrane pass occupies residues 162-182 (AQLTPWLIALPFMLLILLLLL). Residues 183–235 (HRELRPLKKLAQALRFRSPESETPLDAKGVPSEVRPLVEALNQLFSRIHSMMV) form the HAMP domain. The Cytoplasmic portion of the chain corresponds to 183-449 (HRELRPLKKL…EGGFEAVVRW (267 aa)). Residues 243-449 (DAAHELRSPL…EGGFEAVVRW (207 aa)) enclose the Histidine kinase domain. At His-246 the chain carries Phosphohistidine; by autocatalysis.

It is found in the cell inner membrane. It carries out the reaction ATP + protein L-histidine = ADP + protein N-phospho-L-histidine.. Functionally, member of a two-component regulatory system QseB/QseC. Activates the flagella regulon by activating transcription of FlhDC. May activate QseB by phosphorylation. This Salmonella typhi protein is Sensor protein QseC (qseC).